The chain runs to 136 residues: MTERTLVLIKPDAVERQLIGEIISRIERKGLTIAALELRQVGEELASQHYAEHESKPFFGSLLEFITSGPVMAAIVEGPRAVAAVRQLTGGTDPVEKAAPGTIRGDLALETQFNLVHGSDSTASAQREIALWFPGI.

Residues K10, F58, R86, T92, R104, and N114 each contribute to the ATP site. The Pros-phosphohistidine intermediate role is filled by H117.

It belongs to the NDK family. In terms of assembly, homotetramer. Requires Mg(2+) as cofactor.

The protein resides in the cytoplasm. The catalysed reaction is a 2'-deoxyribonucleoside 5'-diphosphate + ATP = a 2'-deoxyribonucleoside 5'-triphosphate + ADP. It catalyses the reaction a ribonucleoside 5'-diphosphate + ATP = a ribonucleoside 5'-triphosphate + ADP. In terms of biological role, major role in the synthesis of nucleoside triphosphates other than ATP. The ATP gamma phosphate is transferred to the NDP beta phosphate via a ping-pong mechanism, using a phosphorylated active-site intermediate. In Mycobacterium leprae (strain TN), this protein is Nucleoside diphosphate kinase.